Here is a 324-residue protein sequence, read N- to C-terminus: Mevalonate-3-kinase (324 aa).

Leucine 19 contributes to the substrate binding site. 109–112 is an ATP binding site; sequence SGSS. Residues glutamate 145 and arginine 149 each contribute to the substrate site. ATP-binding residues include arginine 190 and serine 193.

It belongs to the GHMP kinase family. Homodimer.

The enzyme catalyses (R)-mevalonate + ATP = (R)-3-phosphomevalonate + ADP + H(+). The protein operates within isoprenoid biosynthesis; isopentenyl diphosphate biosynthesis via mevalonate pathway. Functionally, catalyzes the phosphorylation of mevalonate (MVA) to yield mevalonate-3-phosphate. Functions in an alternative mevalonate pathway, which passes through mevalonate 3-phosphate rather than mevalonate 5-phosphate. Also able to catalyze the formation of isobutene via the conversion of 3-hydroxyisovalerate (3-HIV) to an unstable 3-phosphate intermediate that undergoes a spontaneous decarboxylation. The sequence is that of Mevalonate-3-kinase from Picrophilus torridus (strain ATCC 700027 / DSM 9790 / JCM 10055 / NBRC 100828 / KAW 2/3).